A 317-amino-acid polypeptide reads, in one-letter code: DNA-directed RNA polymerase subunit alpha (317 aa).

The alpha N-terminal domain (alpha-NTD) stretch occupies residues 1–234 (MKQFVRPEFI…AHLEFFIDLN (234 aa)). The interval 249-317 (DDKELDRTVE…ASLGLAFRQS (69 aa)) is alpha C-terminal domain (alpha-CTD).

This sequence belongs to the RNA polymerase alpha chain family. As to quaternary structure, homodimer. The RNAP catalytic core consists of 2 alpha, 1 beta, 1 beta' and 1 omega subunit. When a sigma factor is associated with the core the holoenzyme is formed, which can initiate transcription.

It catalyses the reaction RNA(n) + a ribonucleoside 5'-triphosphate = RNA(n+1) + diphosphate. Its function is as follows. DNA-dependent RNA polymerase catalyzes the transcription of DNA into RNA using the four ribonucleoside triphosphates as substrates. This chain is DNA-directed RNA polymerase subunit alpha, found in Mycoplasma capricolum subsp. capricolum (strain California kid / ATCC 27343 / NCTC 10154).